The sequence spans 158 residues: Endoribonuclease YbeY (158 aa).

Zn(2+)-binding residues include H119, H123, and D129.

It belongs to the endoribonuclease YbeY family. It depends on Zn(2+) as a cofactor.

The protein resides in the cytoplasm. Its function is as follows. Single strand-specific metallo-endoribonuclease involved in late-stage 70S ribosome quality control and in maturation of the 3' terminus of the 16S rRNA. This is Endoribonuclease YbeY from Chlamydia felis (strain Fe/C-56) (Chlamydophila felis).